The following is a 28-amino-acid chain: Omega-conotoxin-like CnVIIH (28 aa).

3 cysteine pairs are disulfide-bonded: Cys-1–Cys-16, Cys-8–Cys-20, and Cys-15–Cys-27. Pro-7 is modified (4-hydroxyproline; partial). Met-12 carries the post-translational modification Methionine sulfoxide. A Cysteine amide modification is found at Cys-27.

This sequence belongs to the conotoxin O1 superfamily. As to expression, expressed by the venom duct.

Its subcellular location is the secreted. Its function is as follows. Omega-conotoxins act at presynaptic membranes, they bind and block voltage-gated calcium channels (Cav). This toxin blocks N-type calcium channels (Cav2.2/CACNA1B) with high potency. Unexpectedly, it does not show any blocking activity at amphibian neuromuscular junction. In vivo, when intracerebroventricularly injected into mice causes shaking activity, and, at higher doses, causes mild tremors. When injected intramuscularly into fish, it causes paralysis, and, at higher doses, causes death. This is Omega-conotoxin-like CnVIIH from Conus consors (Singed cone).